The sequence spans 672 residues: Peptidoglycan D,D-transpeptidase MrdA (672 aa).

A helical membrane pass occupies residues 21-41 (IFFAVGLVIICLLVLASRYAY). S326 (acyl-ester intermediate) is an active-site residue. Positions 350, 365, 371, and 384 each coordinate Zn(2+). The interval 616-672 (ANHQVNGGLMTAGIKPGELPSGNESASSTPATSAPTSAAASTPQATPTRPATNEVDE) is disordered. A compositionally biased stretch (low complexity) spans 640–672 (SASSTPATSAPTSAAASTPQATPTRPATNEVDE).

It belongs to the transpeptidase family. MrdA subfamily. As to quaternary structure, monomer. Zn(2+) is required as a cofactor.

It is found in the cell inner membrane. It catalyses the reaction Preferential cleavage: (Ac)2-L-Lys-D-Ala-|-D-Ala. Also transpeptidation of peptidyl-alanyl moieties that are N-acyl substituents of D-alanine.. It functions in the pathway cell wall biogenesis; peptidoglycan biosynthesis. Inhibited by the beta-lactams sulbactam and piperacillin-tazobactam. Its function is as follows. Catalyzes cross-linking of the peptidoglycan cell wall. Involved in the determination of the rod shape of the cell. This Acinetobacter baumannii (strain ATCC 19606 / DSM 30007 / JCM 6841 / CCUG 19606 / CIP 70.34 / NBRC 109757 / NCIMB 12457 / NCTC 12156 / 81) protein is Peptidoglycan D,D-transpeptidase MrdA.